Consider the following 361-residue polypeptide: DNA replication and repair protein RecF (361 aa).

30-37 contributes to the ATP binding site; the sequence is GPNGSGKT.

It belongs to the RecF family.

It is found in the cytoplasm. Functionally, the RecF protein is involved in DNA metabolism; it is required for DNA replication and normal SOS inducibility. RecF binds preferentially to single-stranded, linear DNA. It also seems to bind ATP. In Yersinia pseudotuberculosis serotype IB (strain PB1/+), this protein is DNA replication and repair protein RecF.